Consider the following 105-residue polypeptide: Large ribosomal subunit protein uL24 (105 aa).

It belongs to the universal ribosomal protein uL24 family. In terms of assembly, part of the 50S ribosomal subunit.

In terms of biological role, one of two assembly initiator proteins, it binds directly to the 5'-end of the 23S rRNA, where it nucleates assembly of the 50S subunit. One of the proteins that surrounds the polypeptide exit tunnel on the outside of the subunit. This Mycolicibacterium smegmatis (strain ATCC 700084 / mc(2)155) (Mycobacterium smegmatis) protein is Large ribosomal subunit protein uL24.